Consider the following 1295-residue polypeptide: Serine protease pet autotransporter (1295 aa).

The first 52 residues, 1 to 52 (MNKIYSIKYSAATGGLIAVSELAKKVICKTNRKISAALLSLAVISYTNIIYA), serve as a signal peptide directing secretion. In terms of domain architecture, Peptidase S6 spans 54–304 (NMDISKAWAR…TPFDSKTTNE (251 aa)). Catalysis depends on charge relay system residues histidine 124, aspartate 153, and serine 260. An Autotransporter domain is found at 1029-1295 (DINGEAGAWA…AINANFRYSF (267 aa)).

In terms of processing, cleaved to release the mature protein from the outer membrane.

It is found in the periplasm. The protein localises to the secreted. It localises to the cell surface. Its subcellular location is the cell outer membrane. With respect to regulation, inhibition of cytotoxic activity by phenylmethylsulfonyl fluoride. Serine protease with enterotoxic and cytotoxic activity. Internalization into the host cell is required for the induction of cytopathic effects. However, the serine activity is not necessary for secretion and internalization into the host cell. This Escherichia coli O44:H18 (strain 042 / EAEC) protein is Serine protease pet autotransporter (pet).